The sequence spans 497 residues: Reticulophagy regulator 1 (497 aa).

Positions 1–51 are disordered; it reads MASPAPPEHAEEGCPAPAAEEQAPPSPPPPQASPAERQQQEEEAQEAGAAE. Over 1–59 the chain is Cytoplasmic; it reads MASPAPPEHAEEGCPAPAAEEQAPPSPPPPQASPAERQQQEEEAQEAGAAEGAGLQVEE. Residues 13 to 23 are compositionally biased toward low complexity; it reads GCPAPAAEEQA. Residues 60–80 traverse the membrane as a helical segment; the sequence is AAGRAAAAVTWLLGEPVLWLG. Over 81–95 the chain is Lumenal; sequence CRADELLSWKRPLRS. Positions 84-233 are reticulon homology domain; sequence DELLSWKRPL…LLCAFLCPLF (150 aa). A helical membrane pass occupies residues 96–116; it reads LLGFVAANLLFWFLALTPWRV. The Cytoplasmic portion of the chain corresponds to 117 to 118; sequence YH. The chain crosses the membrane as a helical span at residues 119–139; the sequence is LISVMILGRVIMQIIKDMVLS. At 140–208 the chain is on the lumenal side; the sequence is RTRGAQLWRS…LVCSVCTFFT (69 aa). S149 carries the post-translational modification Phosphoserine. The residue at position 151 (S151) is a Phosphoserine; by CAMK2B. The residue at position 153 (S153) is a Phosphoserine. The helical transmembrane segment at 209 to 229 threads the bilayer; the sequence is ILGSYIPGVILSYLLLLCAFL. The Cytoplasmic segment spans residues 230–497; it reads CPLFKCNDIG…GFLSNLLGGH (268 aa). Over residues 319–330 the composition is skewed to polar residues; sequence FNLSEGYTPQTD. Disordered stretches follow at residues 319–365, 377–396, 436–455, and 468–497; these read FNLS…EDEL, KEQL…AAGL, LSQA…GDDF, and SELG…LGGH. Composition is skewed to basic and acidic residues over residues 334-348 and 377-388; these read DLDR…RDLS and KEQLDSGHRPSK. Over residues 443-455 the composition is skewed to acidic residues; sequence PEEDTDTEEGDDF. Residues 453-458 carry the LIR motif motif; it reads DDFELL. The span at 471–490 shows a compositional bias: polar residues; sequence GLTQDQEAEAQQNKKSSGFL.

This sequence belongs to the RETREG family. As to quaternary structure, homooligomer; oligomerization is enhanced following endoplasmic reticulum stress and is mediated by the reticulon homology domain. Interacts with ATG8 family modifier proteins MAP1LC3A, MAP1LC3B, MAP1LC3C, GABARAP, GABARAPL1 and GABARAPL2. Shows higher affinity for GABARAPL1 than for MAP1LC3A or MAP1LC3B. Phosphorylation at Ser-151 by CAMK2B enhances oligomerization and membrane scission and reticulophagy activity. In terms of tissue distribution, overexpressed in esophageal squamous cell carcinoma.

The protein localises to the golgi apparatus. It is found in the cis-Golgi network membrane. The protein resides in the endoplasmic reticulum membrane. Endoplasmic reticulum (ER)-anchored autophagy regulator which mediates ER delivery into lysosomes through sequestration into autophagosomes. Promotes membrane remodeling and ER scission via its membrane bending capacity and targets the fragments into autophagosomes via interaction with ATG8 family proteins. Active under basal conditions. Required for collagen quality control in a LIR motif-dependent manner. Required for long-term survival of nociceptive and autonomic ganglion neurons. Functionally, (Microbial infection) During SARS-CoV-2 infection, RETREG1-mediated reticulophagy is promoted by SARS-CoV-2 ORF3A protein. This induces endoplasmic reticulum stress and inflammatory responses and facilitates viral infection. This chain is Reticulophagy regulator 1, found in Homo sapiens (Human).